The following is a 357-amino-acid chain: Dihydroorotate dehydrogenase (quinone) (357 aa).

Residues 61 to 65 (AGFDK) and Thr85 contribute to the FMN site. Lys65 lines the substrate pocket. 110 to 114 (NRFGF) is a binding site for substrate. The FMN site is built by Asn141 and Asn172. Substrate is bound at residue Asn172. Catalysis depends on Ser175, which acts as the Nucleophile. Asn177 provides a ligand contact to substrate. FMN contacts are provided by Lys217 and Gly245. 246 to 247 (NT) contributes to the substrate binding site. Residues Gly268, Gly297, and 318–319 (YS) each bind FMN.

This sequence belongs to the dihydroorotate dehydrogenase family. Type 2 subfamily. As to quaternary structure, monomer. Requires FMN as cofactor.

It localises to the cell membrane. It catalyses the reaction (S)-dihydroorotate + a quinone = orotate + a quinol. Its pathway is pyrimidine metabolism; UMP biosynthesis via de novo pathway; orotate from (S)-dihydroorotate (quinone route): step 1/1. Functionally, catalyzes the conversion of dihydroorotate to orotate with quinone as electron acceptor. This is Dihydroorotate dehydrogenase (quinone) from Xanthobacter autotrophicus (strain ATCC BAA-1158 / Py2).